The sequence spans 244 residues: Ribonuclease HII (244 aa).

One can recognise an RNase H type-2 domain in the interval 23–236 (KIILGLDEAG…SKKLLKEFEE (214 aa)). The a divalent metal cation site is built by Asp-29, Glu-30, and Asp-130.

This sequence belongs to the RNase HII family. Mn(2+) is required as a cofactor. The cofactor is Mg(2+).

It localises to the cytoplasm. It carries out the reaction Endonucleolytic cleavage to 5'-phosphomonoester.. Its function is as follows. Endonuclease that specifically degrades the RNA of RNA-DNA hybrids. The sequence is that of Ribonuclease HII from Methanococcus vannielii (strain ATCC 35089 / DSM 1224 / JCM 13029 / OCM 148 / SB).